Consider the following 184-residue polypeptide: Ribosome-recycling factor (184 aa).

This sequence belongs to the RRF family.

It is found in the cytoplasm. Its function is as follows. Responsible for the release of ribosomes from messenger RNA at the termination of protein biosynthesis. May increase the efficiency of translation by recycling ribosomes from one round of translation to another. This Borreliella afzelii (strain PKo) (Borrelia afzelii) protein is Ribosome-recycling factor.